Consider the following 234-residue polypeptide: Thrombin-like enzyme ancrod (234 aa).

The region spanning 1–227 (VIGGDECNIN…YRDWVNNVIA (227 aa)) is the Peptidase S1 domain. 6 cysteine pairs are disulfide-bonded: cysteine 7-cysteine 141, cysteine 28-cysteine 44, cysteine 78-cysteine 232, cysteine 120-cysteine 188, cysteine 152-cysteine 167, and cysteine 178-cysteine 203. Residue asparagine 23 is glycosylated (N-linked (GlcNAc...) asparagine). The Charge relay system role is filled by histidine 43. N-linked (GlcNAc...) asparagine glycosylation occurs at asparagine 79. The Charge relay system role is filled by aspartate 88. N-linked (GlcNAc...) asparagine glycosylation is found at asparagine 99 and asparagine 148. Serine 182 (charge relay system) is an active-site residue. Asparagine 229 carries N-linked (GlcNAc...) asparagine glycosylation.

The protein belongs to the peptidase S1 family. Snake venom subfamily. As to quaternary structure, monomer. Expressed by the venom gland.

The protein localises to the secreted. The enzyme catalyses Selective cleavage of Arg-|-Xaa bond in fibrinogen, to form fibrin, and release fibrinopeptide A. The specificity of further degradation of fibrinogen varies with species origin of the enzyme.. In terms of biological role, thrombin-like snake venom serine protease that acts as an anticoagulant. It cleaves fibrinogen (FGA) to split off the A-fibrinopeptides (A, AY and AP), but not the B-fibrinopeptide. The resulting fibrin polymers are imperfectly formed and much smaller in size (1 to 2 um long) than the fibrin polymers produced by the action of thrombin. These ancrod-induced microthrombi are friable, unstable, urea-soluble and have significantly degraded alpha chains. They do not cross-link to form thrombi. They are markedly susceptible to digestion by plasmin and are rapidly removed from circulation by either reticuloendothelial phagocytosis or normal fibrinolysis, or both. Anticoagulation through the removal of fibrinogen from the blood is rapid, occurring within hours following its administration. It does not activate plasminogen and does not degrade preformed, fully cross-linked thrombin fibrin. It also reduces the level of plasminogen activator inhibitor (PAI) and may stimulate the release of tissue plasminogen activator (PLAT) from the endothelium. The profibrinolytic effect of these 2 actions appears to be limited to local microthrombus degradation. This is Thrombin-like enzyme ancrod from Calloselasma rhodostoma (Malayan pit viper).